Here is a 704-residue protein sequence, read N- to C-terminus: Pentatricopeptide repeat-containing protein At4g28010 (704 aa).

PPR repeat units lie at residues 71–105 (LAFA…DTFI), 106–140 (NFVS…GFAF), 141–175 (NVYN…SLMP), 176–210 (DVFS…GCSW), 211–245 (SLVT…GLEA), 246–280 (DLVV…GDSP), 281–315 (CAIT…GVRP), 316–350 (NVYT…DEEP), 351–385 (NAVT…RTRP), 386–416 (DNIT…MLKD), 423–453 (DVIS…LVEK), 458–492 (DRVT…KIVR), 493–527 (NSDT…ELQP), 528–562 (SVFD…NNFP), 563–597 (DVVS…GLSP), 598–632 (DLFT…GFEP), and 633–667 (DAHI…DIVL).

It belongs to the PPR family. P subfamily.

In Arabidopsis thaliana (Mouse-ear cress), this protein is Pentatricopeptide repeat-containing protein At4g28010.